The chain runs to 338 residues: Mitoferrin-1 (338 aa).

Residues 1 to 42 (MELRSGSVGSQAVARRMDGDSRDGGGGKDATGSEDYENLPTS) are disordered. Positions 15–26 (RRMDGDSRDGGG) are enriched in basic and acidic residues. 3 Solcar repeats span residues 43–131 (ASVS…MKRT), 141–225 (NSHL…LQEQ), and 232–326 (YNPQ…FKYF). Transmembrane regions (helical) follow at residues 45–64 (VSTH…SVMY), 106–125 (GVNV…FACY), 143–162 (HLAN…AVMN), 200–219 (SYTT…FITY), 234–253 (PQSH…AATT), and 301–320 (GIQA…WSVY).

This sequence belongs to the mitochondrial carrier (TC 2.A.29) family. In terms of assembly, interacts with ACB10; this interaction stabilizes SLC25A37 and enhances the function of SLC25A37 to import mitochondrial iron during erythroid differentiation.

The protein localises to the mitochondrion inner membrane. The catalysed reaction is Fe(2+)(in) = Fe(2+)(out). Functionally, mitochondrial iron transporter that specifically mediates iron uptake in developing erythroid cells, thereby playing an essential role in heme biosynthesis. This is Mitoferrin-1 (SLC25A37) from Homo sapiens (Human).